The following is a 413-amino-acid chain: Transmembrane protein 184A (413 aa).

The next 7 helical transmembrane spans lie at 47 to 69 (WLFL…ALVL), 93 to 113 (LLLI…LLGD), 130 to 150 (FVIY…GAIM), 187 to 207 (LQFC…QAFG), 223 to 243 (VTLI…LFYF), 258 to 278 (FLTI…LAIL), and 300 to 320 (LAAG…SVAL). A disordered region spans residues 372-413 (QHYTQQATHEAPRPGTHPSGGSGGSRKSRSLEKRMLIPSEDL).

Belongs to the TMEM184 family. Expressed in vascular cells (at protein level).

The protein localises to the cell membrane. Its subcellular location is the cytoplasm. The protein resides in the perinuclear region. It localises to the cytoplasmic vesicle membrane. It is found in the early endosome membrane. The protein localises to the endosome. Its subcellular location is the cytoplasmic vesicle. The protein resides in the secretory vesicle membrane. Its function is as follows. Acts as a heparin receptor in vascular cells. May be involved in vesicle transport in exocrine cells and Sertoli cells. The chain is Transmembrane protein 184A (TMEM184A) from Homo sapiens (Human).